The primary structure comprises 252 residues: Phosphate import ATP-binding protein PstB (252 aa).

Positions 5–247 (VKIDKLNVHF…PEKKQTEDYI (243 aa)) constitute an ABC transporter domain. 37–44 (GPSGCGKS) serves as a coordination point for ATP.

Belongs to the ABC transporter superfamily. Phosphate importer (TC 3.A.1.7) family. As to quaternary structure, the complex is composed of two ATP-binding proteins (PstB), two transmembrane proteins (PstC and PstA) and a solute-binding protein (PstS).

The protein localises to the cell inner membrane. It carries out the reaction phosphate(out) + ATP + H2O = ADP + 2 phosphate(in) + H(+). Part of the ABC transporter complex PstSACB involved in phosphate import. Responsible for energy coupling to the transport system. The sequence is that of Phosphate import ATP-binding protein PstB from Geobacter metallireducens (strain ATCC 53774 / DSM 7210 / GS-15).